A 700-amino-acid chain; its full sequence is Cap-specific mRNA (nucleoside-2'-O-)-methyltransferase 2 (700 aa).

The segment at 1–21 is disordered; it reads MSFRSSPQGKPHPMTDYQSIR. Residues 109-321 form the Adrift-type SAM-dependent 2'-O-MTase domain; sequence EFVTVAWCKL…VYVICLNYNK (213 aa). K117 is an active-site residue. 3 residues coordinate S-adenosyl-L-methionine: G143, W164, and D234. D234 is an active-site residue. Residue K274 is the Proton acceptor of the active site.

It localises to the nucleus. It catalyses the reaction a 5'-end (N(7)-methyl 5'-triphosphoguanosine)-(2'-O-methyl-ribonucleoside)-(ribonucleotide) in mRNA + S-adenosyl-L-methionine = a 5'-end (N(7)-methyl 5'-triphosphoguanosine)-(2'-O-methyl-ribonucleoside)-(2'-O-methyl-ribonucleotide) in mRNA + S-adenosyl-L-homocysteine + H(+). Functionally, probable S-adenosyl-L-methionine-dependent methyltransferase that mediates mRNA cap2 2'-O-ribose methylation to the 5'-cap structure of mRNAs. May methylate the ribose of the second nucleotide of a m(7)GpppG-capped mRNA (cap0) to produce m(7)GpppRmpNm (cap2). Regulates expression of tracheal genes required for pathfinding on the segmental nerve. This is Cap-specific mRNA (nucleoside-2'-O-)-methyltransferase 2 (cmtr2) from Drosophila melanogaster (Fruit fly).